Consider the following 152-residue polypeptide: SsrA-binding protein (152 aa).

It belongs to the SmpB family.

The protein resides in the cytoplasm. Its function is as follows. Required for rescue of stalled ribosomes mediated by trans-translation. Binds to transfer-messenger RNA (tmRNA), required for stable association of tmRNA with ribosomes. tmRNA and SmpB together mimic tRNA shape, replacing the anticodon stem-loop with SmpB. tmRNA is encoded by the ssrA gene; the 2 termini fold to resemble tRNA(Ala) and it encodes a 'tag peptide', a short internal open reading frame. During trans-translation Ala-aminoacylated tmRNA acts like a tRNA, entering the A-site of stalled ribosomes, displacing the stalled mRNA. The ribosome then switches to translate the ORF on the tmRNA; the nascent peptide is terminated with the 'tag peptide' encoded by the tmRNA and targeted for degradation. The ribosome is freed to recommence translation, which seems to be the essential function of trans-translation. This is SsrA-binding protein from Lactobacillus helveticus (strain DPC 4571).